Consider the following 370-residue polypeptide: UDP-3-O-acylglucosamine N-acyltransferase (370 aa).

Histidine 252 (proton acceptor) is an active-site residue. The tract at residues 348–370 is disordered; the sequence is NAAAEKRDGPAPNAASKATGDKV.

The protein belongs to the transferase hexapeptide repeat family. LpxD subfamily. As to quaternary structure, homotrimer.

It carries out the reaction a UDP-3-O-[(3R)-3-hydroxyacyl]-alpha-D-glucosamine + a (3R)-hydroxyacyl-[ACP] = a UDP-2-N,3-O-bis[(3R)-3-hydroxyacyl]-alpha-D-glucosamine + holo-[ACP] + H(+). It participates in bacterial outer membrane biogenesis; LPS lipid A biosynthesis. Its function is as follows. Catalyzes the N-acylation of UDP-3-O-acylglucosamine using 3-hydroxyacyl-ACP as the acyl donor. Is involved in the biosynthesis of lipid A, a phosphorylated glycolipid that anchors the lipopolysaccharide to the outer membrane of the cell. The sequence is that of UDP-3-O-acylglucosamine N-acyltransferase from Paraburkholderia phytofirmans (strain DSM 17436 / LMG 22146 / PsJN) (Burkholderia phytofirmans).